Reading from the N-terminus, the 501-residue chain is Betaine aldehyde dehydrogenase, chloroplastic (501 aa).

The N-terminal 7 residues, 1–7, are a transit peptide targeting the chloroplast; sequence MAIRVPS. NAD(+) is bound at residue 238 to 243; that stretch reads GSTATG. The active-site Proton acceptor is the Glu-260. The active-site Nucleophile is Cys-294.

It belongs to the aldehyde dehydrogenase family. In terms of assembly, homodimer.

The protein localises to the plastid. Its subcellular location is the chloroplast. It catalyses the reaction betaine aldehyde + NAD(+) + H2O = glycine betaine + NADH + 2 H(+). It functions in the pathway amine and polyamine biosynthesis; betaine biosynthesis via choline pathway; betaine from betaine aldehyde: step 1/1. The chain is Betaine aldehyde dehydrogenase, chloroplastic (BADH4) from Amaranthus hypochondriacus (Prince-of-Wales feather).